The primary structure comprises 521 residues: Cytochrome P450 monooxygenase astF (521 aa).

A helical membrane pass occupies residues Thr-14–Gly-34. Asn-198, Asn-218, Asn-268, and Asn-281 each carry an N-linked (GlcNAc...) asparagine glycan. Cys-430 is a heme binding site.

Belongs to the cytochrome P450 family. It depends on heme as a cofactor.

Its subcellular location is the membrane. The protein operates within secondary metabolite biosynthesis; terpenoid biosynthesis. Its function is as follows. Cytochrome P450 monooxygenase; part of the gene cluster that mediates the biosynthesis of astellolides, drimane-type sesquiterpene esters that show antimicrobial, anti-inflammatory, and anti-tumor activities. The first step in astellolide biosynthesis is performed by the sesquiterpene cyclase astC that catalyzes the formation of drimanyl pyrophosphate from farnesyl pyrophosphate. Drimanyl pyrophosphate is then dephosphorylated by the sesquiterpene phosphatase astI to produce drimanyl monophosphate which is further dephosphorylated to drim-8-ene-11-ol by atsK. Drim-8-ene-11-ol is converted to confertifolin, probably by the cytochrome P450 monooxygenase astD and/or the dehydrogenase astE. The cytochrome P450 monooxygenases astB, astF and astJ then hydroxylate confertifolin at C6, C14, or C15 to form trihydroxy confertifolin. The nonribosomal peptide synthetase astA catalyzes ester bond formation between trihydroxy contifolin and benzoic acid (BA) or 4-hydroxy benzoic acid (4HBA), leading to the formation of dideacetyl astellolides A and B, respectively. Finally, the O-acetyltransferase astG converts dideacetyl astellolides A and B into deacetyl astellolides A and B. In Aspergillus oryzae (strain ATCC 42149 / RIB 40) (Yellow koji mold), this protein is Cytochrome P450 monooxygenase astF.